Consider the following 426-residue polypeptide: Probable alpha-galactosidase B (426 aa).

The N-terminal stretch at 1–13 is a signal peptide; sequence MSRSKTRQGKLPA. Intrachain disulfides connect Cys24-Cys56 and Cys106-Cys136. The active-site Nucleophile is the Asp134. N-linked (GlcNAc...) asparagine glycosylation is found at Asn141 and Asn159. 204 to 208 contributes to the substrate binding site; that stretch reads EWGQA. Asn215 is a glycosylation site (N-linked (GlcNAc...) asparagine). Catalysis depends on Asp226, which acts as the Proton donor. An N-linked (GlcNAc...) asparagine glycan is attached at Asn265.

It belongs to the glycosyl hydrolase 27 family.

It localises to the secreted. It carries out the reaction Hydrolysis of terminal, non-reducing alpha-D-galactose residues in alpha-D-galactosides, including galactose oligosaccharides, galactomannans and galactolipids.. In terms of biological role, hydrolyzes a variety of simple alpha-D-galactoside as well as more complex molecules such as oligosaccharides and polysaccharides. This chain is Probable alpha-galactosidase B (aglB), found in Aspergillus fumigatus (strain CBS 144.89 / FGSC A1163 / CEA10) (Neosartorya fumigata).